The following is a 354-amino-acid chain: Uroporphyrinogen decarboxylase (354 aa).

Residues 27-31 (RQAGR), aspartate 77, tyrosine 154, threonine 209, and histidine 327 each bind substrate.

The protein belongs to the uroporphyrinogen decarboxylase family. Homodimer.

It localises to the cytoplasm. It catalyses the reaction uroporphyrinogen III + 4 H(+) = coproporphyrinogen III + 4 CO2. The protein operates within porphyrin-containing compound metabolism; protoporphyrin-IX biosynthesis; coproporphyrinogen-III from 5-aminolevulinate: step 4/4. Catalyzes the decarboxylation of four acetate groups of uroporphyrinogen-III to yield coproporphyrinogen-III. This chain is Uroporphyrinogen decarboxylase, found in Klebsiella pneumoniae (strain 342).